The following is a 160-amino-acid chain: Major strawberry allergen Fra a 1-2 (160 aa).

This sequence belongs to the BetVI family. As to quaternary structure, monomer. Interacts with AP. As to expression, highly expressed in ripe red fruits. Expressed in roots and white fruits. Expressed at low levels in open flowers.

In terms of biological role, involved in the control of flavonoid biosynthesis in fruits, probably by binding directly to natural flavonoids. Binds the natural flavonoid myricetin with affinities in the low micromolar range. The protein is Major strawberry allergen Fra a 1-2 of Fragaria ananassa (Strawberry).